The following is a 254-amino-acid chain: Insulin-like growth factor-binding protein 4 (254 aa).

An N-terminal signal peptide occupies residues 1–21 (MLPFGLVAALLLAAGPRPSLG). The region spanning 23-103 (EAIHCPPCSE…MHGQGVCTEL (81 aa)) is the IGFBP N-terminal domain. Disulfide bonds link Cys27–Cys53, Cys30–Cys55, Cys38–Cys56, Cys44–Cys59, Cys67–Cys80, and Cys74–Cys100. N-linked (GlcNAc...) asparagine glycosylation is present at Asn125. 4 disulfides stabilise this stretch: Cys131/Cys138, Cys170/Cys200, Cys211/Cys222, and Cys224/Cys245. Residues 167 to 245 (QGSCQSELHR…GLEPKGELDC (79 aa)) form the Thyroglobulin type-1 domain. Residue Ser251 is modified to Phosphoserine.

In terms of assembly, binds IGF2 more than IGF1.

It localises to the secreted. Functionally, IGF-binding proteins prolong the half-life of the IGFs and have been shown to either inhibit or stimulate the growth promoting effects of the IGFs on cell culture. They alter the interaction of IGFs with their cell surface receptors. The sequence is that of Insulin-like growth factor-binding protein 4 (Igfbp4) from Mus musculus (Mouse).